Consider the following 450-residue polypeptide: Methionine aminopeptidase 2-2 (450 aa).

Basic and acidic residues-rich tracts occupy residues 1 to 10 and 30 to 39; these read MGAKISEDHP and RGAHLSRDGD. The disordered stretch occupies residues 1 to 100; it reads MGAKISEDHP…PPRVPLSELF (100 aa). Residues 47–56 are compositionally biased toward acidic residues; sequence GDDDDDDDEG. The span at 69–86 shows a compositional bias: basic residues; that stretch reads KKKKKKRKPKKKKAKKAT. Residue His-211 participates in substrate binding. The a divalent metal cation site is built by Asp-232, Asp-243, and His-302. His-310 serves as a coordination point for substrate. Glu-335 and Glu-431 together coordinate a divalent metal cation.

This sequence belongs to the peptidase M24A family. Methionine aminopeptidase eukaryotic type 2 subfamily. Requires Co(2+) as cofactor. It depends on Zn(2+) as a cofactor. The cofactor is Mn(2+). Fe(2+) serves as cofactor.

It is found in the cytoplasm. The catalysed reaction is Release of N-terminal amino acids, preferentially methionine, from peptides and arylamides.. In terms of biological role, cotranslationally removes the N-terminal methionine from nascent proteins. The N-terminal methionine is often cleaved when the second residue in the primary sequence is small and uncharged (Met-Ala-, Cys, Gly, Pro, Ser, Thr, or Val). This Fusarium vanettenii (strain ATCC MYA-4622 / CBS 123669 / FGSC 9596 / NRRL 45880 / 77-13-4) (Fusarium solani subsp. pisi) protein is Methionine aminopeptidase 2-2.